A 295-amino-acid polypeptide reads, in one-letter code: MLILPIVKGEYKKDYSLKHLTWFKVGGNAEIFFKPFDSEDLASFLIQNKQKLPITTFGAGSNIIIRDGGIEGVTIKLGQNFSNIEFIDEHLIVGSSCLNYNLAKFCQANAITGFEFLVGIPGTIGGGVVMNAGAYDSEFKDIIVKIEAIDFAGNFLTFTNEEIGFKYRSNNLPKDLIILKAVFKVNKGDSENILLRMNEINNARSATQPIKERTGGSTFANPEGLKSWELIDKAGLRGYRIGGASMSELHCNFMINNGDATAKDLEDLGDFVRQKVFEDSGVELKWEIKRLGRYV.

The FAD-binding PCMH-type domain maps to 24–188 (KVGGNAEIFF…LKAVFKVNKG (165 aa)). The active site involves arginine 168. Catalysis depends on serine 217, which acts as the Proton donor. Glutamate 287 is a catalytic residue.

The protein belongs to the MurB family. FAD serves as cofactor.

It localises to the cytoplasm. It carries out the reaction UDP-N-acetyl-alpha-D-muramate + NADP(+) = UDP-N-acetyl-3-O-(1-carboxyvinyl)-alpha-D-glucosamine + NADPH + H(+). The protein operates within cell wall biogenesis; peptidoglycan biosynthesis. Functionally, cell wall formation. This Rickettsia felis (strain ATCC VR-1525 / URRWXCal2) (Rickettsia azadi) protein is UDP-N-acetylenolpyruvoylglucosamine reductase.